A 122-amino-acid chain; its full sequence is Large ribosomal subunit protein bL12 (122 aa).

Belongs to the bacterial ribosomal protein bL12 family. In terms of assembly, homodimer. Part of the ribosomal stalk of the 50S ribosomal subunit. Forms a multimeric L10(L12)X complex, where L10 forms an elongated spine to which 2 to 4 L12 dimers bind in a sequential fashion. Binds GTP-bound translation factors.

Forms part of the ribosomal stalk which helps the ribosome interact with GTP-bound translation factors. Is thus essential for accurate translation. This chain is Large ribosomal subunit protein bL12, found in Xylella fastidiosa (strain M23).